A 963-amino-acid chain; its full sequence is Probable sucrose-phosphate synthase 2 (963 aa).

Residues 111 to 150 (KLRTDTNADMSEDLFEGEKGEDAGDPSVAYGDSTTGSSPK) are disordered.

The protein belongs to the glycosyltransferase 1 family. Homodimer or homotetramer. Expressed in germinating seeds.

It carries out the reaction beta-D-fructose 6-phosphate + UDP-alpha-D-glucose = sucrose 6(F)-phosphate + UDP + H(+). It functions in the pathway glycan biosynthesis; sucrose biosynthesis; sucrose from D-fructose 6-phosphate and UDP-alpha-D-glucose: step 1/2. Its activity is regulated as follows. Activity is regulated by phosphorylation and moderated by concentration of metabolites and light. Functionally, plays a role in photosynthetic sucrose synthesis by catalyzing the rate-limiting step of sucrose biosynthesis from UDP-glucose and fructose- 6-phosphate. Involved in the regulation of carbon partitioning in the leaves of plants. May regulate the synthesis of sucrose and therefore play a major role as a limiting factor in the export of photoassimilates out of the leaf. Plays a role for sucrose availability that is essential for plant growth and fiber elongation. The polypeptide is Probable sucrose-phosphate synthase 2 (SPS2) (Oryza sativa subsp. japonica (Rice)).